Here is a 329-residue protein sequence, read N- to C-terminus: MASQLTDAFARKFFYLRLSITDVCNFRCTYCLPDGYKPGAVNNNGFLSVDEVRRVTRAFSALGTEKVRLTGGEPSLRRDFTEIIAAVRENPAIRQIAVTTNGYRLARDVERWRDAGLTAINVSVDSLDARQFHAITGQDKFHQVMDGIDAAFAAGFDKVKVNTVLMRDVNHHQLDTFLAWIQPRRIQLRFIELMETGEGSDLFRRHHLSGMVLRDELLRRGWIHQIRQRSDGPAQVFCHPDYAGEIGLIMPYEKDFCATCNRLRVSSVGKLHLCLFGEGGVDLRDLMVEDEQQAELEARIAEALTHKKQTHFLHQGNTGITQNLSYIGG.

The Radical SAM core domain maps to 8 to 234; sequence AFARKFFYLR…QIRQRSDGPA (227 aa). R17 is a GTP binding site. [4Fe-4S] cluster is bound by residues C24 and C28. An S-adenosyl-L-methionine-binding site is contributed by Y30. [4Fe-4S] cluster is bound at residue C31. R68 lines the GTP pocket. G72 lines the S-adenosyl-L-methionine pocket. Residue T99 coordinates GTP. S123 provides a ligand contact to S-adenosyl-L-methionine. K160 is a binding site for GTP. M194 provides a ligand contact to S-adenosyl-L-methionine. Positions 257 and 260 each coordinate [4Fe-4S] cluster. Residue 262 to 264 coordinates GTP; sequence RLR. C274 is a [4Fe-4S] cluster binding site.

The protein belongs to the radical SAM superfamily. MoaA family. As to quaternary structure, monomer and homodimer. The cofactor is [4Fe-4S] cluster.

The catalysed reaction is GTP + AH2 + S-adenosyl-L-methionine = (8S)-3',8-cyclo-7,8-dihydroguanosine 5'-triphosphate + 5'-deoxyadenosine + L-methionine + A + H(+). The protein operates within cofactor biosynthesis; molybdopterin biosynthesis. Catalyzes the cyclization of GTP to (8S)-3',8-cyclo-7,8-dihydroguanosine 5'-triphosphate. In Klebsiella pneumoniae (strain 342), this protein is GTP 3',8-cyclase.